Reading from the N-terminus, the 90-residue chain is Small ribosomal subunit protein bS16 (90 aa).

It belongs to the bacterial ribosomal protein bS16 family.

This chain is Small ribosomal subunit protein bS16, found in Lactococcus lactis subsp. cremoris (strain SK11).